Consider the following 298-residue polypeptide: Putative S-adenosyl-L-methionine-dependent methyltransferase MAV_0778 (298 aa).

S-adenosyl-L-methionine contacts are provided by residues Asp-124 and 153–154 (DL).

It belongs to the UPF0677 family.

Functionally, exhibits S-adenosyl-L-methionine-dependent methyltransferase activity. This chain is Putative S-adenosyl-L-methionine-dependent methyltransferase MAV_0778, found in Mycobacterium avium (strain 104).